A 1592-amino-acid chain; its full sequence is Probable serine/threonine-protein kinase DDB_G0293958 (1592 aa).

A Protein kinase 1 domain is found at 1–302; that stretch reads MTGFEIFKKK…CLNYLKEKLI (302 aa). Residues 2-10 and K43 each bind ATP; that span reads TGFEIFKKK. The active-site Proton acceptor is D158. Disordered regions lie at residues 348–402, 455–526, and 837–867; these read INNN…NNNN, FNDI…SNYN, and KNNN…NDKS. Positions 349-402 are enriched in low complexity; it reads NNNNNNNNNNNNNNNNNNNNNNNNNNNNNNNNNNNNNNNNNNNNNNNNNNNNNN. The stretch at 461–518 forms a coiled coil; sequence STTGEEEEEEKKDNLKRQNENNQIEQEDKGEKHLKETLNNNNNNNNNNNNNNNNNNNN. Basic and acidic residues predominate over residues 486-496; that stretch reads QEDKGEKHLKE. Composition is skewed to low complexity over residues 499 to 526 and 837 to 864; these read NNNN…SNYN and KNNN…NNSN. The region spanning 1342–1592 is the Protein kinase 2 domain; that stretch reads LGTYNLIGDS…KELIECLNKL (251 aa). ATP contacts are provided by residues 1348 to 1356 and K1376; that span reads IGDSVFRNI. D1474 (proton acceptor) is an active-site residue.

The protein belongs to the protein kinase superfamily. Ser/Thr protein kinase family.

The enzyme catalyses L-seryl-[protein] + ATP = O-phospho-L-seryl-[protein] + ADP + H(+). It catalyses the reaction L-threonyl-[protein] + ATP = O-phospho-L-threonyl-[protein] + ADP + H(+). In Dictyostelium discoideum (Social amoeba), this protein is Probable serine/threonine-protein kinase DDB_G0293958.